The sequence spans 477 residues: POC1 centriolar protein homolog B (477 aa).

WD repeat units lie at residues 16–55 (GHKA…RAYR), 58–97 (GHKD…KSSE), 100–139 (AHTA…FLYS), 142–181 (RHTH…CVNN), 183–223 (SDSV…LLQH), 226–265 (VHSC…LIYT), and 268–307 (GHTG…VHYR). The stretch at 449-469 (EQRLSLTEDKLKDCLENQQKL) forms a coiled coil.

This sequence belongs to the WD repeat POC1 family. As to quaternary structure, interacts with POC1A. Interacts with FAM161A. Interacts with CEP44; the interaction is direct and recruits POC1B to centriolar microtubules. Forms a microtubule-associated complex with POC5, CETN2 and FAM161A. Interacts with CCDC15. Phosphorylated in mitotic cells that may be mediated by CDK1.

Its subcellular location is the cytoplasm. The protein resides in the cytoskeleton. The protein localises to the microtubule organizing center. It is found in the centrosome. It localises to the centriole. Its subcellular location is the cilium basal body. The protein resides in the spindle pole. Plays an important role in centriole assembly and/or stability and ciliogenesis. Involved in early steps of centriole duplication, as well as in the later steps of centriole length control. Acts in concert with POC1A to ensure centriole integrity and proper mitotic spindle formation. Required for primary cilia formation, ciliary length and also cell proliferation. Required for retinal integrity. Acts as a positive regulator of centriole elongation. In Rattus norvegicus (Rat), this protein is POC1 centriolar protein homolog B (Poc1b).